The chain runs to 338 residues: Phenylalanine--tRNA ligase alpha subunit (338 aa).

E253 provides a ligand contact to Mg(2+).

The protein belongs to the class-II aminoacyl-tRNA synthetase family. Phe-tRNA synthetase alpha subunit type 1 subfamily. As to quaternary structure, tetramer of two alpha and two beta subunits. Requires Mg(2+) as cofactor.

It localises to the cytoplasm. It carries out the reaction tRNA(Phe) + L-phenylalanine + ATP = L-phenylalanyl-tRNA(Phe) + AMP + diphosphate + H(+). This chain is Phenylalanine--tRNA ligase alpha subunit, found in Geobacter sp. (strain M21).